Here is a 304-residue protein sequence, read N- to C-terminus: Probable intron-encoded endonuclease 1 (304 aa).

One can recognise a GIY-YIG domain in the interval 84-175 (DKGGIYSFIN…RFNFDNLYNF (92 aa)).

It to endonucleases of group I introns of fungi and phage.

Its subcellular location is the mitochondrion. In terms of biological role, mitochondrial DNA endonuclease involved in intron homing. This is Probable intron-encoded endonuclease 1 from Neurospora crassa (strain ATCC 24698 / 74-OR23-1A / CBS 708.71 / DSM 1257 / FGSC 987).